The following is a 353-amino-acid chain: UPF0283 membrane protein YcjF (353 aa).

Positions 1 to 19 (MSEPLKPRIDFAEPLKEEP) are enriched in basic and acidic residues. The segment at 1 to 48 (MSEPLKPRIDFAEPLKEEPTSAFKAQQTFSEAESHTFAPAAIDERPED) is disordered. Residues 1–69 (MSEPLKPRID…LRPKRSLWRK (69 aa)) are Periplasmic-facing. A helical membrane pass occupies residues 70–90 (MVMGGLALFGASVVGQGVQWT). Topologically, residues 91-99 (MNAWQTQDW) are cytoplasmic. The helical transmembrane segment at 100–120 (VALGGCAAGALIVGAGVGSVV) threads the bilayer. Topologically, residues 121–212 (TEWWRLWRLR…ARREISRFAA (92 aa)) are periplasmic. A helical membrane pass occupies residues 213 to 233 (ESTLMIAVSPLALVDMAFIAW). The Cytoplasmic segment spans residues 234–353 (RNLRLINRIA…LQKSKSSPEK (120 aa)).

It belongs to the UPF0283 family.

It is found in the cell inner membrane. The sequence is that of UPF0283 membrane protein YcjF (ycjF) from Salmonella typhi.